The following is a 409-amino-acid chain: Endoglucanase B (409 aa).

Residues His-61, 65-66, Tyr-92, and His-127 contribute to the substrate site; that span reads WY. The Proton donor role is filled by Glu-165. Tyr-228 is a binding site for substrate. Residue Glu-254 is the Nucleophile of the active site. Residues 260-261, Trp-288, and 293-295 contribute to the substrate site; these read AT and KDE. The disordered stretch occupies residues 326–372; that stretch reads IRESATTPPSDPTPPSDPDPGEPEPDPGEPDPTPPSDPGDYPAWDPN. A compositionally biased stretch (pro residues) spans 334–343; that stretch reads PSDPTPPSDP. Residues 344–354 show a composition bias toward acidic residues; the sequence is DPGEPEPDPGE.

Belongs to the glycosyl hydrolase 5 (cellulase A) family.

The enzyme catalyses Endohydrolysis of (1-&gt;4)-beta-D-glucosidic linkages in cellulose, lichenin and cereal beta-D-glucans.. The protein is Endoglucanase B (celB) of Evansella cellulosilytica (strain ATCC 21833 / DSM 2522 / FERM P-1141 / JCM 9156 / N-4) (Bacillus cellulosilyticus).